A 229-amino-acid polypeptide reads, in one-letter code: Peptidase E (229 aa).

Catalysis depends on charge relay system residues Ser120, Asp135, and His157.

This sequence belongs to the peptidase S51 family.

It is found in the cytoplasm. It carries out the reaction Dipeptidase E catalyzes the hydrolysis of dipeptides Asp-|-Xaa. It does not act on peptides with N-terminal Glu, Asn or Gln, nor does it cleave isoaspartyl peptides.. Functionally, hydrolyzes dipeptides containing N-terminal aspartate residues. May play a role in allowing the cell to use peptide aspartate to spare carbon otherwise required for the synthesis of the aspartate family of amino acids. The chain is Peptidase E from Citrobacter koseri (strain ATCC BAA-895 / CDC 4225-83 / SGSC4696).